The primary structure comprises 159 residues: Ribosomal RNA large subunit methyltransferase H (159 aa).

S-adenosyl-L-methionine is bound by residues Leu76, Gly108, and 127 to 132 (FSKMTF).

Belongs to the RNA methyltransferase RlmH family. Homodimer.

It is found in the cytoplasm. The catalysed reaction is pseudouridine(1915) in 23S rRNA + S-adenosyl-L-methionine = N(3)-methylpseudouridine(1915) in 23S rRNA + S-adenosyl-L-homocysteine + H(+). Specifically methylates the pseudouridine at position 1915 (m3Psi1915) in 23S rRNA. The sequence is that of Ribosomal RNA large subunit methyltransferase H from Lachnospira eligens (strain ATCC 27750 / DSM 3376 / VPI C15-48 / C15-B4) (Eubacterium eligens).